The following is a 302-amino-acid chain: Ornithine carbamoyltransferase (302 aa).

Residues 52–55, Gln-79, Arg-103, and 130–133 each bind carbamoyl phosphate; these read STRT and HPCQ. L-ornithine-binding positions include Asn-161, Asp-221, and 225–226; that span reads SM. Carbamoyl phosphate is bound by residues 261 to 262 and Arg-289; that span reads CL.

Belongs to the aspartate/ornithine carbamoyltransferase superfamily. OTCase family.

The protein resides in the cytoplasm. The catalysed reaction is carbamoyl phosphate + L-ornithine = L-citrulline + phosphate + H(+). The protein operates within amino-acid biosynthesis; L-arginine biosynthesis; L-arginine from L-ornithine and carbamoyl phosphate: step 1/3. In terms of biological role, reversibly catalyzes the transfer of the carbamoyl group from carbamoyl phosphate (CP) to the N(epsilon) atom of ornithine (ORN) to produce L-citrulline. The polypeptide is Ornithine carbamoyltransferase (Methanosarcina mazei (strain ATCC BAA-159 / DSM 3647 / Goe1 / Go1 / JCM 11833 / OCM 88) (Methanosarcina frisia)).